Reading from the N-terminus, the 455-residue chain is Epoxide hydrolase 1 (455 aa).

A helical; Signal-anchor for type III membrane protein transmembrane segment spans residues 1–21 (MLLELLLASVLGFVIYWFVSG). Residues 22–455 (DKEESLPLED…CKFVGLVERQ (434 aa)) are Cytoplasmic-facing. The active-site Nucleophile is the Asp-226. Arg-295 carries the dimethylated arginine modification. Tyr-374 functions as the Proton donor in the catalytic mechanism. His-431 serves as the catalytic Proton acceptor.

Belongs to the peptidase S33 family.

It is found in the microsome membrane. It localises to the endoplasmic reticulum membrane. It carries out the reaction cis-stilbene oxide + H2O = (1R,2R)-hydrobenzoin. It catalyses the reaction 1-(4-methoxyphenyl)-N-methyl-N-[(3-methyloxetan-3-yl)methyl]methanamine + H2O = 2-{[(4-methoxybenzyl)(methyl)amino]methyl}-2-methylpropane-1,3-diol. The catalysed reaction is 8,9-epoxy-(5Z,11Z,14Z)-eicosatrienoate + H2O = 8,9-dihydroxy-(5Z,11Z,14Z)-eicosatrienoate. The enzyme catalyses 11,12-epoxy-(5Z,8Z,14Z)-eicosatrienoate + H2O = 11,12-dihydroxy-(5Z,8Z,14Z)-eicosatrienoate. It carries out the reaction 2-(5Z,8Z,11Z,14Z-eicosatetraenoyl)-glycerol + H2O = glycerol + (5Z,8Z,11Z,14Z)-eicosatetraenoate + H(+). With respect to regulation, inhibited by 10-hydroxystearamide and methoxy-arachidonyl fluorophosphate. Biotransformation enzyme that catalyzes the hydrolysis of arene and aliphatic epoxides to less reactive and more water soluble dihydrodiols by the trans addition of water. May play a role in the metabolism of endogenous lipids such as epoxide-containing fatty acids. Metabolizes the abundant endocannabinoid 2-arachidonoylglycerol (2-AG) to free arachidonic acid (AA) and glycerol. Binds 20(S)-hydroxycholesterol (20(S)-OHC). This chain is Epoxide hydrolase 1 (EPHX1), found in Oryctolagus cuniculus (Rabbit).